We begin with the raw amino-acid sequence, 737 residues long: Lysyl oxidase homolog 2A (737 aa).

Positions 1–18 are cleaved as a signal peptide; sequence MAVSSALCIFSLLVLAQA. SRCR domains are found at residues 29-130, 159-270, 294-393, and 403-512; these read LRLA…VICN, IRPI…VSCV, VRLR…VRCN, and IRLS…VSCS. 9 cysteine pairs are disulfide-bonded: cysteine 55–cysteine 119, cysteine 68–cysteine 129, cysteine 99–cysteine 109, cysteine 188–cysteine 259, cysteine 201–cysteine 269, cysteine 235–cysteine 245, cysteine 319–cysteine 382, cysteine 332–cysteine 392, and cysteine 363–cysteine 373. Asparagine 256 carries an N-linked (GlcNAc...) asparagine glycan. Asparagine 423 carries an N-linked (GlcNAc...) asparagine glycan. Cystine bridges form between cysteine 432–cysteine 498, cysteine 445–cysteine 511, and cysteine 479–cysteine 489. A lysyl-oxidase like region spans residues 516 to 718; that stretch reads PDLVLNAQLV…WTYSCHIGGS (203 aa). Ca(2+) is bound by residues aspartate 517 and leucine 518. Cystine bridges form between cysteine 541–cysteine 592, cysteine 547–cysteine 662, cysteine 624–cysteine 640, and cysteine 630–cysteine 652. Residues histidine 593, histidine 595, and histidine 597 each contribute to the Cu cation site. N-linked (GlcNAc...) asparagine glycosylation is present at asparagine 611. Residues 620–656 constitute a cross-link (lysine tyrosylquinone (Lys-Tyr)); it reads KASFCLEDTHCDEGISKRYHCANFGEQGITVGCWDTY. Tyrosine 656 carries the post-translational modification 2',4',5'-topaquinone. Residues glutamate 689, aspartate 691, asparagine 694, and asparagine 695 each contribute to the Ca(2+) site. A disulfide bridge links cysteine 699 with cysteine 713.

Belongs to the lysyl oxidase family. Requires Cu cation as cofactor. Lysine tyrosylquinone residue serves as cofactor. In terms of processing, the lysine tyrosylquinone cross-link (LTQ) is generated by condensation of the epsilon-amino group of a lysine with a topaquinone produced by oxidation of tyrosine.

Its subcellular location is the secreted. It is found in the extracellular space. It localises to the extracellular matrix. The protein localises to the basement membrane. The protein resides in the nucleus. Its subcellular location is the chromosome. It is found in the endoplasmic reticulum. It catalyses the reaction L-lysyl-[protein] + O2 + H2O = (S)-2-amino-6-oxohexanoyl-[protein] + H2O2 + NH4(+). Its function is as follows. Mediates the post-translational oxidative deamination of lysine residues on target proteins leading to the formation of deaminated lysine (allysine). Acts as a transcription corepressor and specifically mediates deamination of trimethylated 'Lys-4' of histone H3 (H3K4me3), a specific tag for epigenetic transcriptional activation. Shows no activity against histone H3 when it is trimethylated on 'Lys-9' (H3K9me3) or 'Lys-27' (H3K27me3) or when 'Lys-4' is monomethylated (H3K4me1) or dimethylated (H3K4me2). Also mediates deamination of methylated TAF10, a member of the transcription factor IID (TFIID) complex, which induces release of TAF10 from promoters, leading to inhibition of TFIID-dependent transcription. LOXL2-mediated deamination of TAF10 results in transcriptional repression of genes required for embryonic stem cell pluripotency. Involved in epithelial to mesenchymal transition (EMT) and participates in repression of E-cadherin, probably by mediating deamination of histone H3. When secreted into the extracellular matrix, promotes cross-linking of extracellular matrix proteins by mediating oxidative deamination of peptidyl lysine residues in precursors to fibrous collagen and elastin. Acts as a regulator of sprouting angiogenesis, probably via collagen IV scaffolding. Acts as a regulator of chondrocyte differentiation, probably by regulating expression of factors that control chondrocyte differentiation. Required with loxl2b for correct expression of Sox2 and for neural differentiation. In Danio rerio (Zebrafish), this protein is Lysyl oxidase homolog 2A (loxl2a).